A 156-amino-acid chain; its full sequence is Succinate dehydrogenase assembly factor 2-A, mitochondrial (156 aa).

The N-terminal 24 residues, 1 to 24 (MLRQFLVSTAVRRVVVPSMAQTRC), are a transit peptide targeting the mitochondrion. A disordered region spans residues 35-62 (TPGEIVDYDDPPHIPVPEYPSRPDEPLE).

This sequence belongs to the SDHAF2 family. As to quaternary structure, interacts with the flavoprotein subunit within the SDH catalytic dimer.

It localises to the mitochondrion matrix. Its function is as follows. Plays an essential role in the assembly of succinate dehydrogenase (SDH), an enzyme complex (also referred to as respiratory complex II) that is a component of both the tricarboxylic acid (TCA) cycle and the mitochondrial electron transport chain, and which couples the oxidation of succinate to fumarate with the reduction of ubiquinone (coenzyme Q) to ubiquinol. Required for flavinylation (covalent attachment of FAD) of the flavoprotein subunit of the SDH catalytic dimer. This is Succinate dehydrogenase assembly factor 2-A, mitochondrial from Drosophila ananassae (Fruit fly).